A 446-amino-acid chain; its full sequence is Methionine aminopeptidase 2-1 (446 aa).

The segment at 1-88 (MAAQVTPELA…PPRVILSSIF (88 aa)) is disordered. Over residues 32–44 (ENEDVESDDDNEG) the composition is skewed to acidic residues. Residues 57 to 72 (AKKKKKKKPKKKKKGG) show a composition bias toward basic residues. Position 196 (His-196) interacts with substrate. The a divalent metal cation site is built by Asp-216, Asp-227, and His-296. Residue His-304 participates in substrate binding. The a divalent metal cation site is built by Glu-332 and Glu-427.

The protein belongs to the peptidase M24A family. Methionine aminopeptidase eukaryotic type 2 subfamily. Co(2+) serves as cofactor. The cofactor is Zn(2+). Requires Mn(2+) as cofactor. It depends on Fe(2+) as a cofactor.

It localises to the cytoplasm. It catalyses the reaction Release of N-terminal amino acids, preferentially methionine, from peptides and arylamides.. In terms of biological role, cotranslationally removes the N-terminal methionine from nascent proteins. The N-terminal methionine is often cleaved when the second residue in the primary sequence is small and uncharged (Met-Ala-, Cys, Gly, Pro, Ser, Thr, or Val). The chain is Methionine aminopeptidase 2-1 from Blastomyces gilchristii (strain SLH14081) (Blastomyces dermatitidis).